Reading from the N-terminus, the 325-residue chain is Cytosolic Fe-S cluster assembly factor Nubp1 homolog (325 aa).

Positions 1–26 are disordered; it reads MSSGADVPSDAPAHCPGTQSDDAGKA. [4Fe-4S] cluster-binding residues include C15, C29, C32, and C38. 68–75 is a binding site for ATP; sequence GKGGVGKS. C243 and C246 together coordinate [4Fe-4S] cluster.

This sequence belongs to the Mrp/NBP35 ATP-binding proteins family. NUBP1/NBP35 subfamily. Heterotetramer of 2 Nubp1 and 2 Nubp2 chains. It depends on [4Fe-4S] cluster as a cofactor.

It localises to the cytoplasm. In terms of biological role, component of the cytosolic iron-sulfur (Fe/S) protein assembly (CIA) machinery. Required for maturation of extramitochondrial Fe-S proteins. The Nubp1-Nubp2 heterotetramer forms a Fe-S scaffold complex, mediating the de novo assembly of an Fe-S cluster and its transfer to target apoproteins. This is Cytosolic Fe-S cluster assembly factor Nubp1 homolog from Anopheles gambiae (African malaria mosquito).